The following is a 418-amino-acid chain: 3-isopropylmalate dehydratase large subunit (418 aa).

[4Fe-4S] cluster-binding residues include C299, C359, and C362.

The protein belongs to the aconitase/IPM isomerase family. LeuC type 2 subfamily. Heterodimer of LeuC and LeuD. The cofactor is [4Fe-4S] cluster.

It carries out the reaction (2R,3S)-3-isopropylmalate = (2S)-2-isopropylmalate. Its pathway is amino-acid biosynthesis; L-leucine biosynthesis; L-leucine from 3-methyl-2-oxobutanoate: step 2/4. Its function is as follows. Catalyzes the isomerization between 2-isopropylmalate and 3-isopropylmalate, via the formation of 2-isopropylmaleate. The sequence is that of 3-isopropylmalate dehydratase large subunit from Nitratidesulfovibrio vulgaris (strain DSM 19637 / Miyazaki F) (Desulfovibrio vulgaris).